A 365-amino-acid polypeptide reads, in one-letter code: Fatty acid hydroxylase vlmA (365 aa).

The segment at 20 to 41 (TTIKRRQNDKTKTPKTKPVSKI) is disordered. Residue asparagine 47 is glycosylated (N-linked (GlcNAc...) asparagine). The next 4 helical transmembrane spans lie at 62–82 (ILLQSLLPITVHQLTTLVLSI), 89–109 (VHPFLLRLCVIIGYGYAFRFL), 144–164 (LNWSLPLTVGSRTVMCVLVAY), and 179–199 (WWAWLAVYLSLYPIILDFYYY). Residues 189-335 (LYPIILDFYY…TRIWDRLFGT (147 aa)) enclose the Fatty acid hydroxylase domain.

It belongs to the sterol desaturase family. TMEM195 subfamily.

The protein localises to the membrane. It functions in the pathway secondary metabolite biosynthesis. Its function is as follows. Fatty acid hydroxylase; part of the gene cluster that mediates the biosynthesis of verlamelin, a lipopeptide that exhibits antifungal activity against plant pathogenic fungi. Verlamelin is a cyclic hexadepsipeptide and is bridged by ester bonding between a 5-hydroxytetradecanoic acid moiety and a carboxyl group on the terminal Val of amide-bonded tetradecanoyl-hexapeptide D-allo-Thr-D-Ala-L-Pro-L-Gln-D-Tyr-L-Val. VlmA and vlmB are altogether regarded as essential components in the biosynthesis of 5-hydroxytetradecanoic acid. VlmA catalyzes the hydroxylation at position C5 of tetradecanoic acid produced in primary metabolism, while the precise function of vlmB still remains to be solved. To be loaded onto the waiting NRPS, 5-hydroxytetradecanoic acid is activated in the form of acyladenylate by the AMP-dependent ligase vlmC. VlmS seems to accept the fatty-acyl intermediate onto the initial module to further elongate amino acid residues by the downstream modules. In addition, in the last module at its C-terminus, vlmS contains a surplus condensation (C) domain that may be involved in cyclization, the last step to form verlamelin. This is Fatty acid hydroxylase vlmA from Lecanicillium sp.